The chain runs to 135 residues: Transcription antitermination protein NusB (135 aa).

The protein belongs to the NusB family.

Involved in transcription antitermination. Required for transcription of ribosomal RNA (rRNA) genes. Binds specifically to the boxA antiterminator sequence of the ribosomal RNA (rrn) operons. The protein is Transcription antitermination protein NusB of Lacticaseibacillus paracasei (strain ATCC 334 / BCRC 17002 / CCUG 31169 / CIP 107868 / KCTC 3260 / NRRL B-441) (Lactobacillus paracasei).